The sequence spans 269 residues: Cell cycle regulator CcrZ (269 aa).

ATP-binding residues include Phe39, His76, Trp77, Met78, and Gly80. Positions 164–171 (HCDVNHNN) match the Brenner's motif [HXDhX3N] motif. Asp166 acts as the Proton acceptor in catalysis. Residues 180 to 203 (LYLIDWDGAMIADPAMDLGPLLYH) carry the APH motif.

The protein belongs to the aminoglycoside phosphotransferase family. In terms of assembly, monomer in solution. Interacts with DnaA (via domains I (1-82) and III (111-326)). Interacts with DnaB. Interacts with FtsZ.

It localises to the cytoplasm. The enzyme catalyses D-ribose + ATP = D-ribose 5-phosphate + ADP + H(+). It carries out the reaction 2-deoxy-D-ribose + ATP = 2-deoxy-D-ribose 5-phosphate + ADP + H(+). Activated by D-ribose and 2-deoxy-D-ribose. Slightly activated by kanamycin and gentamicin. Its function is as follows. Plays a role in cell cycle regulation and chromosome integrity. Activates DnaA-dependent chromosomal DNA replication initiation ensuring that the chromosome is replicated at the right time during the cell cycle. May regulate replication initiation through phosphorylation of a possible second messenger or metabolite, and by interacting with replication initiation proteins. Has ATPase activity with D-ribose and 2-deoxy-D-ribose in vitro, but not with choline. Involved in DNA damage response. The protein is Cell cycle regulator CcrZ of Bacillus subtilis (strain 168).